Here is an 893-residue protein sequence, read N- to C-terminus: UPF0182 protein CLK_3152 (893 aa).

The next 7 helical transmembrane spans lie at 9–29, 49–69, 94–114, 154–174, 202–222, 246–266, and 273–293; these read IPLF…NFII, AIII…WMYY, LFFI…SSSY, VIIS…FILE, LAIV…IKIW, FYKI…LSIV, and VSIC…ASFL.

It belongs to the UPF0182 family.

The protein localises to the cell membrane. This Clostridium botulinum (strain Loch Maree / Type A3) protein is UPF0182 protein CLK_3152.